Consider the following 1232-residue polypeptide: Anoctamin-8 (1232 aa).

The segment at 1 to 32 (MAEAASGAGGTSLEGERGKRPPPEGEPAAPAS) is disordered. N-acetylalanine is present on alanine 2. Residues 2-244 (AEAASGAGGT…DDICDYFGVK (243 aa)) lie on the Extracellular side of the membrane. Residues 14 to 23 (EGERGKRPPP) show a composition bias toward basic and acidic residues. A helical membrane pass occupies residues 245–265 (IAMYFAWLGFYTSAMVYPAVF). The Cytoplasmic portion of the chain corresponds to 266-281 (GSVLYTFTEADQTSRD). A helical membrane pass occupies residues 282–302 (VSCVVFALFNVIWSTLFLEEW). Residues 303–356 (KRRGAELAYKWGTLDSPGEAVEEPRPQFRGVRRISPITRAEEFYYPPWKRLLFQ) lie on the Extracellular side of the membrane. Serine 318 bears the Phosphoserine mark. Residues 357–377 (LLVSLPLCLACLVCVFLLMLG) traverse the membrane as a helical segment. Residues 378–400 (CFQLQELVLSVKGLPRLARFLPK) are Cytoplasmic-facing. Residues 401–421 (VMLALLVSVSAEGYKKLAIWL) traverse the membrane as a helical segment. The Extracellular segment spans residues 422 to 437 (NDMENYRLESAYEKHL). Residues 438–458 (IIKVVLFQFVNSYLSLFYIGF) traverse the membrane as a helical segment. Residues 459–750 (YLKDMERLKE…YEDTFQDYQE (292 aa)) lie on the Cytoplasmic side of the membrane. Residues 524–650 (RRLEPQADEG…SPTMVEKGLE (127 aa)) form a disordered region. Residues 532–551 (EGGGGGSGGGGRRCLSGGCG) show a composition bias toward gly residues. Over residues 582–606 (EEDEDDEEEEDEEEEEDEEEGEEGG) the composition is skewed to acidic residues. Serine 669 carries the post-translational modification Phosphoserine. The interval 681–728 (RAGGEGRDQGPDGGPDPEPGSNSDSTRRQRRQNRSSWIDPPEEEHSPQ) is disordered. Residues 751 to 771 (MFVQFGYVVLFSSAFPLAALC) form a helical membrane-spanning segment. Topologically, residues 772–807 (ALVNNLIEIRSDAFKLCTGLQRPFGQRVESIGQWQK) are extracellular. The residue at position 801 (serine 801) is a Phosphoserine; by FAM20C. A helical transmembrane segment spans residues 808-828 (VMEAMGVLAIVVNCYLIGQCG). Residues 829–841 (QLQRLFPWLSPEA) are Cytoplasmic-facing. The helical transmembrane segment at 842-862 (AIVSVVVLEHFALLLKYLIHV) threads the bilayer. Over 863–1232 (AIPDIPGWVA…QAVCWPSGWH (370 aa)) the chain is Extracellular. 3 disordered regions span residues 888–970 (RHER…GSLL), 997–1152 (LAAA…WQWD), and 1174–1232 (PPCA…SGWH). The segment covering 904-932 (RREEEERQRHAEHHARREHDSGGREEARA) has biased composition (basic and acidic residues). 2 stretches are compositionally biased toward low complexity: residues 933-953 (EGSG…AKGS) and 997-1006 (LAAAGAGATT). Arginine 1020 is modified (asymmetric dimethylarginine; alternate). Arginine 1020 is modified (omega-N-methylarginine; alternate). A compositionally biased stretch (basic and acidic residues) spans 1031-1043 (KSPETRRDSERSH). The span at 1078 to 1087 (TPSSGSSRVQ) shows a compositional bias: polar residues. Composition is skewed to pro residues over residues 1130–1145 (PAPP…PTPP) and 1197–1221 (LPPP…PSPS).

The protein belongs to the anoctamin family. Expressed in embryonic stem cells, fetal brain and neural tissues.

It localises to the cell membrane. Its function is as follows. Does not exhibit calcium-activated chloride channel (CaCC) activity. The protein is Anoctamin-8 (ANO8) of Homo sapiens (Human).